The following is a 150-amino-acid chain: Large ribosomal subunit protein bL9 (150 aa).

This sequence belongs to the bacterial ribosomal protein bL9 family.

Its function is as follows. Binds to the 23S rRNA. The protein is Large ribosomal subunit protein bL9 of Ruthia magnifica subsp. Calyptogena magnifica.